Consider the following 396-residue polypeptide: NADH-quinone oxidoreductase subunit D (396 aa).

The protein belongs to the complex I 49 kDa subunit family. NDH-1 is composed of 14 different subunits. Subunits NuoB, C, D, E, F, and G constitute the peripheral sector of the complex.

The protein localises to the cell inner membrane. It catalyses the reaction a quinone + NADH + 5 H(+)(in) = a quinol + NAD(+) + 4 H(+)(out). Its function is as follows. NDH-1 shuttles electrons from NADH, via FMN and iron-sulfur (Fe-S) centers, to quinones in the respiratory chain. The immediate electron acceptor for the enzyme in this species is believed to be ubiquinone. Couples the redox reaction to proton translocation (for every two electrons transferred, four hydrogen ions are translocated across the cytoplasmic membrane), and thus conserves the redox energy in a proton gradient. The polypeptide is NADH-quinone oxidoreductase subunit D (Chelativorans sp. (strain BNC1)).